The chain runs to 246 residues: Large ribosomal subunit protein uL3 (246 aa).

2 disordered regions span residues 140–162 (SHRSIGSTGGRQDPGKTFKNKKM) and 215–246 (DVPLPGKFRENGSAGASQVEAAPEAPASEENA). Position 151 is an N5-methylglutamine (Gln151). A compositionally biased stretch (low complexity) spans 234–246 (EAAPEAPASEENA).

It belongs to the universal ribosomal protein uL3 family. As to quaternary structure, part of the 50S ribosomal subunit. Forms a cluster with proteins L14 and L19. Post-translationally, methylated by PrmB.

Functionally, one of the primary rRNA binding proteins, it binds directly near the 3'-end of the 23S rRNA, where it nucleates assembly of the 50S subunit. In Methylorubrum extorquens (strain PA1) (Methylobacterium extorquens), this protein is Large ribosomal subunit protein uL3.